A 1409-amino-acid polypeptide reads, in one-letter code: Inositol hexakisphosphate and diphosphoinositol-pentakisphosphate kinase 1 (1409 aa).

64–65 lines the substrate pocket; the sequence is KK. Residues R145, K198, H205, R224, 248 to 251, and 257 to 259 contribute to the ATP site; these read EEFM and DVK. A substrate-binding site is contributed by 224–225; sequence RK. Residues K259 and R273 each coordinate substrate. ATP contacts are provided by residues S275, D320, and 332–334; that span reads DVN. A substrate-binding site is contributed by 337–340; it reads SFVK. The segment at 382–453 is polyphosphoinositide-binding domain; sequence PTTSGTMMEL…VLDITRLLLA (72 aa). The segment at 891–996 is disordered; the sequence is GVEEEGSAPA…PTEMKQSGLG (106 aa). Residues S920 and S963 each carry the phosphoserine modification. Residues 981 to 996 are compositionally biased toward polar residues; the sequence is FSSSRPPTEMKQSGLG. Phosphoserine is present on residues S1013 and S1049. A compositionally biased stretch (polar residues) spans 1110–1119; that stretch reads MHSSQASDNP. A disordered region spans residues 1110–1183; the sequence is MHSSQASDNP…PSLNSHVAEE (74 aa). Phosphoserine is present on residues S1121 and S1128. Positions 1144-1162 are enriched in low complexity; the sequence is SSGPSSTVSSAGPSSPTTV. Positions 1163 to 1178 are enriched in polar residues; it reads DGNSQFGFSDQPSLNS.

It belongs to the histidine acid phosphatase family. VIP1 subfamily.

Its subcellular location is the cytoplasm. The protein localises to the cytosol. The protein resides in the cell membrane. It catalyses the reaction 1D-myo-inositol hexakisphosphate + ATP = 1-diphospho-1D-myo-inositol 2,3,4,5,6-pentakisphosphate + ADP. The enzyme catalyses 5-diphospho-1D-myo-inositol 1,2,3,4,6-pentakisphosphate + ATP + H(+) = 1,5-bis(diphospho)-1D-myo-inositol 2,3,4,6-tetrakisphosphate + ADP. Bifunctional inositol kinase that acts in concert with the IP6K kinases IP6K1, IP6K2 and IP6K3 to synthesize the diphosphate group-containing inositol pyrophosphates diphosphoinositol pentakisphosphate, PP-InsP5, and bis-diphosphoinositol tetrakisphosphate, (PP)2-InsP4. PP-InsP5 and (PP)2-InsP4, also respectively called InsP7 and InsP8, regulate a variety of cellular processes, including apoptosis, vesicle trafficking, cytoskeletal dynamics, exocytosis, insulin signaling and neutrophil activation. Phosphorylates inositol hexakisphosphate (InsP6) at position 1 to produce PP-InsP5 which is in turn phosphorylated by IP6Ks to produce (PP)2-InsP4. Alternatively, phosphorylates PP-InsP5 at position 1, produced by IP6Ks from InsP6, to produce (PP)2-InsP4. Activated when cells are exposed to hyperosmotic stress. The polypeptide is Inositol hexakisphosphate and diphosphoinositol-pentakisphosphate kinase 1 (Pongo abelii (Sumatran orangutan)).